The following is a 93-amino-acid chain: Phosphoribosyl-ATP pyrophosphatase (93 aa).

This sequence belongs to the PRA-PH family.

It localises to the cytoplasm. It catalyses the reaction 1-(5-phospho-beta-D-ribosyl)-ATP + H2O = 1-(5-phospho-beta-D-ribosyl)-5'-AMP + diphosphate + H(+). It functions in the pathway amino-acid biosynthesis; L-histidine biosynthesis; L-histidine from 5-phospho-alpha-D-ribose 1-diphosphate: step 2/9. This chain is Phosphoribosyl-ATP pyrophosphatase, found in Mycolicibacterium vanbaalenii (strain DSM 7251 / JCM 13017 / BCRC 16820 / KCTC 9966 / NRRL B-24157 / PYR-1) (Mycobacterium vanbaalenii).